Here is a 1817-residue protein sequence, read N- to C-terminus: Nuclear pore complex protein Nup98-Nup96 (1817 aa).

The segment at 1–156 (MFNKSFGTPF…LFGPSSFTAA (156 aa)) is FG repeats 1. Residues 157-213 (PTGTTIKFNPPTGTDTMVKAGVSTNISTKHQCITAMKEYESKSLEELRLEDYQANRK) are GLEBS; interaction with RAE1. The FG repeats 2 stretch occupies residues 214–480 (GPQNQVGAGT…NTTTATLGFG (267 aa)). The interval 512 to 535 (PFGDSPLFRNPMSDPKKKEERLKP) is disordered. Serine 524 carries the post-translational modification Phosphoserine. Basic and acidic residues predominate over residues 525-534 (DPKKKEERLK). A Glycyl lysine isopeptide (Lys-Gly) (interchain with G-Cter in SUMO2) cross-link involves residue lysine 563. An N6-acetyllysine; alternate modification is found at lysine 603. Lysine 603 is covalently cross-linked (Glycyl lysine isopeptide (Lys-Gly) (interchain with G-Cter in SUMO2); alternate). Serine 608, serine 612, serine 618, serine 623, serine 625, and serine 653 each carry phosphoserine. The disordered stretch occupies residues 614–633 (VNRDSENLASPSEYPENGER). The interval 662–682 (PIAKPIPQTPESAGNKHSNSN) is disordered. Lysine 665 participates in a covalent cross-link: Glycyl lysine isopeptide (Lys-Gly) (interchain with G-Cter in SUMO2). Threonine 670 is subject to Phosphothreonine. Residues 670 to 682 (TPESAGNKHSNSN) show a composition bias toward polar residues. A phosphoserine mark is found at serine 673, serine 681, serine 683, and serine 839. One can recognise a Peptidase S59 domain in the interval 738–880 (KVGYYTIPSM…GSWVFKVSHF (143 aa)). Serine 881 serves as the catalytic Nucleophile. The segment at 886–937 (QDSDEEEEEHPSKTSTKKLKTAPLPPASQTTPLQMALNGKPAPPPQSQSPEV) is disordered. A phosphoserine mark is found at serine 888, serine 897, and serine 934. A Phosphothreonine modification is found at threonine 1000. Serine 1023, serine 1028, serine 1043, serine 1060, and serine 1064 each carry phosphoserine. Threonine 1070 carries the post-translational modification Phosphothreonine. At serine 1329 the chain carries Phosphoserine. Phosphothreonine is present on threonine 1772.

The protein belongs to the nucleoporin GLFG family. As to quaternary structure, part of the nuclear pore complex (NPC). Interacts directly with NUP96. Part of the Nup160 subcomplex in the nuclear pore which is composed of NUP160, NUP133, NUP107 and NUP96; this complex plays a role in RNA export and in tethering NUP98 and NUP153 to the nucleus. Interacts with RAE1. Does not interact with TPR. Interacts with NUP88. Interacts directly with NUP88 and NUP214, subunits of the cytoplasmic filaments of the NPC. Interacts (via N-terminus) with DHX9 (via DRBM, OB-fold and RGG domains); this interaction occurs in a RNA-dependent manner and stimulates DHX9-mediated ATPase activity. (Microbial infection) Interacts with HIV-1 capsid protein P24 and nucleocapsid protein P7 (in vitro); the interaction may promote the integration of the virus in the host nucleus (in vitro). In terms of assembly, (Microbial infection) Interacts with vesicular stomatitis virus protein M. As to quaternary structure, (Microbial infection) Interacts with SARS coronavirus-2/SARS-CoV-2 ORF6 protein; the interaction blocks STAT1 nuclear translocation, antagonizes interferon signaling and blocks mRNA nuclear export (ex vivo). (Microbial infection) Interacts with SARS coronavirus/SARS-CoV ORF6 protein. Post-translationally, isoform 1 to isoform 4 are autoproteolytically cleaved to yield Nup98 and Nup96 or Nup98 only, respectively. Cleaved Nup98 is necessary for the targeting of Nup98 to the nuclear pore and the interaction with Nup96. In terms of processing, proteolytically degraded after poliovirus (PV) infection; degradation is partial and NCP- and TPR-binding domains withstand degradation.

It localises to the nucleus membrane. The protein localises to the nucleus. Its subcellular location is the nuclear pore complex. The protein resides in the nucleoplasm. Plays a role in the nuclear pore complex (NPC) assembly and/or maintenance. NUP98 and NUP96 are involved in the bidirectional transport across the NPC. May anchor NUP153 and TPR to the NPC. In cooperation with DHX9, plays a role in transcription and alternative splicing activation of a subset of genes. Involved in the localization of DHX9 in discrete intranuclear foci (GLFG-body). Its function is as follows. (Microbial infection) Interacts with HIV-1 capsid protein P24 and nucleocapsid protein P7 and may thereby promote the integration of the virus in the host nucleus (in vitro). Binding affinity to HIV-1 CA-NC complexes bearing the capsid change Asn-74-Asp is reduced (in vitro). This is Nuclear pore complex protein Nup98-Nup96 from Homo sapiens (Human).